The sequence spans 227 residues: ATP synthase F(0) complex subunit a (227 aa).

6 consecutive transmembrane segments (helical) span residues 14 to 34 (LLGH…FPSP), 69 to 89 (WALM…LGLL), 98 to 118 (QLSM…LTGL), 139 to 159 (IPAL…ALGV), 167 to 187 (AGHL…PILP), and 190 to 210 (SILT…VAMI).

This sequence belongs to the ATPase A chain family. In terms of assembly, component of the ATP synthase complex composed at least of ATP5F1A/subunit alpha, ATP5F1B/subunit beta, ATP5MC1/subunit c (homooctomer), MT-ATP6/subunit a, MT-ATP8/subunit 8, ATP5ME/subunit e, ATP5MF/subunit f, ATP5MG/subunit g, ATP5MK/subunit k, ATP5MJ/subunit j, ATP5F1C/subunit gamma, ATP5F1D/subunit delta, ATP5F1E/subunit epsilon, ATP5PF/subunit F6, ATP5PB/subunit b, ATP5PD/subunit d, ATP5PO/subunit OSCP. ATP synthase complex consists of a soluble F(1) head domain (subunits alpha(3) and beta(3)) - the catalytic core - and a membrane F(0) domain - the membrane proton channel (subunits c, a, 8, e, f, g, k and j). These two domains are linked by a central stalk (subunits gamma, delta, and epsilon) rotating inside the F1 region and a stationary peripheral stalk (subunits F6, b, d, and OSCP). Interacts with DNAJC30; interaction is direct.

Its subcellular location is the mitochondrion inner membrane. It catalyses the reaction H(+)(in) = H(+)(out). Its function is as follows. Subunit a, of the mitochondrial membrane ATP synthase complex (F(1)F(0) ATP synthase or Complex V) that produces ATP from ADP in the presence of a proton gradient across the membrane which is generated by electron transport complexes of the respiratory chain. ATP synthase complex consist of a soluble F(1) head domain - the catalytic core - and a membrane F(1) domain - the membrane proton channel. These two domains are linked by a central stalk rotating inside the F(1) region and a stationary peripheral stalk. During catalysis, ATP synthesis in the catalytic domain of F(1) is coupled via a rotary mechanism of the central stalk subunits to proton translocation. With the subunit c (ATP5MC1), forms the proton-conducting channel in the F(0) domain, that contains two crucial half-channels (inlet and outlet) that facilitate proton movement from the mitochondrial intermembrane space (IMS) into the matrix. Protons are taken up via the inlet half-channel and released through the outlet half-channel, following a Grotthuss mechanism. This is ATP synthase F(0) complex subunit a from Anas platyrhynchos (Mallard).